The chain runs to 297 residues: Quinate/shikimate dehydrogenase (297 aa).

Positions 80 and 116 each coordinate substrate. NAD(+)-binding positions include 141-144 (AGGA), 164-167 (NRRD), Lys214, 241-244 (CVYN), and Gly264.

Belongs to the shikimate dehydrogenase family. As to quaternary structure, homodimer.

The catalysed reaction is L-quinate + NAD(+) = 3-dehydroquinate + NADH + H(+). It catalyses the reaction L-quinate + NADP(+) = 3-dehydroquinate + NADPH + H(+). It carries out the reaction shikimate + NADP(+) = 3-dehydroshikimate + NADPH + H(+). The enzyme catalyses shikimate + NAD(+) = 3-dehydroshikimate + NADH + H(+). It participates in metabolic intermediate biosynthesis; chorismate biosynthesis; chorismate from D-erythrose 4-phosphate and phosphoenolpyruvate: step 4/7. The actual biological function of YdiB remains unclear, nor is it known whether 3-dehydroshikimate or quinate represents the natural substrate. Catalyzes the reversible NAD-dependent reduction of both 3-dehydroshikimate (DHSA) and 3-dehydroquinate to yield shikimate (SA) and quinate, respectively. It can use both NAD or NADP for catalysis, however it has higher catalytic efficiency with NAD. This chain is Quinate/shikimate dehydrogenase, found in Shigella dysenteriae serotype 1 (strain Sd197).